The following is a 103-amino-acid chain: Small ribosomal subunit protein uS10 (103 aa).

Belongs to the universal ribosomal protein uS10 family. Part of the 30S ribosomal subunit.

Its function is as follows. Involved in the binding of tRNA to the ribosomes. This Shewanella loihica (strain ATCC BAA-1088 / PV-4) protein is Small ribosomal subunit protein uS10.